A 197-amino-acid chain; its full sequence is Translation machinery-associated protein 22 (197 aa).

One can recognise an SUI1 domain in the interval 103 to 174; that stretch reads IRIKRVERNK…DVREFLIKNY (72 aa).

This sequence belongs to the DENR family. As to quaternary structure, interacts with the 40S ribosomal subunit.

The protein resides in the cytoplasm. This Botryotinia fuckeliana (strain B05.10) (Noble rot fungus) protein is Translation machinery-associated protein 22 (tma22).